The chain runs to 468 residues: 6-phospho-beta-galactosidase (468 aa).

D-galactose 6-phosphate contacts are provided by glutamine 19, histidine 116, asparagine 159, glutamate 160, and asparagine 297. Glutamate 160 (proton donor) is an active-site residue. Residue glutamate 375 is the Nucleophile of the active site. The D-galactose 6-phosphate site is built by serine 428, tryptophan 429, lysine 435, and tyrosine 437.

Belongs to the glycosyl hydrolase 1 family.

It carries out the reaction a 6-phospho-beta-D-galactoside + H2O = D-galactose 6-phosphate + an alcohol. The protein operates within carbohydrate metabolism; lactose degradation; D-galactose 6-phosphate and beta-D-glucose from lactose 6-phosphate: step 1/1. This is 6-phospho-beta-galactosidase from Streptococcus pyogenes serotype M6 (strain ATCC BAA-946 / MGAS10394).